Reading from the N-terminus, the 545-residue chain is Zinc finger protein 697 (545 aa).

Residues 1–143 form a disordered region; that stretch reads MKQEDNQGVC…EQPAPPVLPW (143 aa). Lys-2 is covalently cross-linked (Glycyl lysine isopeptide (Lys-Gly) (interchain with G-Cter in SUMO2)). The segment covering 23-36 has biased composition (acidic residues); that stretch reads DFEDSEDREGDPEE. Over residues 45–55 the composition is skewed to basic and acidic residues; it reads DTNKREGHPEP. 2 stretches are compositionally biased toward acidic residues: residues 79–94 and 118–135; these read LSEE…EDDQ and EDDD…EEEQ. 11 C2H2-type zinc fingers span residues 189-211, 261-283, 289-311, 317-339, 353-375, 381-403, 409-431, 437-459, 465-487, 493-515, and 521-543; these read TICP…QRIH, FRCG…LRLH, NLCA…RRLH, YPCP…RRAH, FACG…QRIH, HGCG…QRVH, YMCS…KRTH, YVCR…LRVH, FRCG…QRTH, YTCI…RRIH, and HKCA…QKLH.

It belongs to the krueppel C2H2-type zinc-finger protein family.

The protein resides in the nucleus. RNA-interacting protein with a high number of miRNA targets. Acts as a damage-induced regulator of muscle remodeling by mediating the interferon gamma response in muscle cells. This chain is Zinc finger protein 697, found in Homo sapiens (Human).